Reading from the N-terminus, the 519-residue chain is UPF0053 protein bbp_300 (519 aa).

The next 7 membrane-spanning stretches (helical) occupy residues 13–35 (LLTL…AILS), 48–70 (LIGL…WMVT), 80–102 (YFSF…FKAT), 123–145 (AGFW…DAII), 150–172 (TINN…LIAS), 185–207 (VVVL…ALGF), and 212–231 (GYLY…NQIA). CBS domains lie at 311–373 (MTPR…IIDF) and 374–434 (SSTT…DADE).

This sequence belongs to the UPF0053 family.

It localises to the cell membrane. This chain is UPF0053 protein bbp_300, found in Buchnera aphidicola subsp. Baizongia pistaciae (strain Bp).